The primary structure comprises 392 residues: O-phospho-L-seryl-tRNA:Cys-tRNA synthase 2 (392 aa).

Pyridoxal 5'-phosphate is bound by residues 85–86 (AR), asparagine 190, and 213–215 (SGH). The residue at position 216 (lysine 216) is an N6-(pyridoxal phosphate)lysine.

Belongs to the SepCysS family. Homodimer. Interacts with SepRS. Pyridoxal 5'-phosphate is required as a cofactor.

It carries out the reaction O-phospho-L-seryl-tRNA(Cys) + hydrogen sulfide + H(+) = L-cysteinyl-tRNA(Cys) + phosphate. Its function is as follows. Converts O-phospho-L-seryl-tRNA(Cys) (Sep-tRNA(Cys)) to L-cysteinyl-tRNA(Cys) (Cys-tRNA(Cys)). This Methanocorpusculum labreanum (strain ATCC 43576 / DSM 4855 / Z) protein is O-phospho-L-seryl-tRNA:Cys-tRNA synthase 2.